A 143-amino-acid chain; its full sequence is Transcriptional regulator MraZ (143 aa).

SpoVT-AbrB domains follow at residues 5–47 (EYQH…PQEE) and 76–119 (ASEC…SKSE).

It belongs to the MraZ family. As to quaternary structure, forms oligomers.

It localises to the cytoplasm. Its subcellular location is the nucleoid. This chain is Transcriptional regulator MraZ, found in Listeria monocytogenes serotype 4b (strain CLIP80459).